A 98-amino-acid chain; its full sequence is DNA-directed RNA polymerase subunit Rpo11 (98 aa).

It belongs to the archaeal Rpo11/eukaryotic RPB11/RPC19 RNA polymerase subunit family. Part of the RNA polymerase complex.

The protein localises to the cytoplasm. It catalyses the reaction RNA(n) + a ribonucleoside 5'-triphosphate = RNA(n+1) + diphosphate. Functionally, DNA-dependent RNA polymerase (RNAP) catalyzes the transcription of DNA into RNA using the four ribonucleoside triphosphates as substrates. This is DNA-directed RNA polymerase subunit Rpo11 from Korarchaeum cryptofilum (strain OPF8).